Consider the following 171-residue polypeptide: Prolyl-tRNA synthetase associated domain-containing protein 1 (171 aa).

The protein belongs to the PRORSD1 family.

This Bos taurus (Bovine) protein is Prolyl-tRNA synthetase associated domain-containing protein 1 (PRORSD1).